A 190-amino-acid polypeptide reads, in one-letter code: Putative triphosphatase YjbK (190 aa).

A CYTH domain is found at 4 to 189; the sequence is EIEIEFKNML…LRFYEEKRKS (186 aa).

This is Putative triphosphatase YjbK (yjbK) from Bacillus subtilis (strain 168).